Reading from the N-terminus, the 122-residue chain is Urocortin (122 aa).

A signal peptide spans 1-25; it reads MRQRGRATLLVALLLLVQLRPESSQ. A propeptide spanning residues 26–80 is cleaved from the precursor; that stretch reads WSPAAAAANVVQDPNLRWNPGVRNQGGGVRALLLLLAERFPRRAGSEPAGERQRR. Val-120 is modified (valine amide).

Belongs to the sauvagine/corticotropin-releasing factor/urotensin I family. Interacts with CRHR1 and CRHR2 (via their N-terminal extracellular domain).

Its subcellular location is the secreted. Functionally, acts in vitro to stimulate the secretion of adrenocorticotropic hormone (ACTH). Binds with high affinity to CRF receptor types 1, 2-alpha, and 2-beta. Plays a role in the establishment of normal hearing thresholds. Reduces food intake and regulates ghrelin levels in gastric body and plasma. The sequence is that of Urocortin (Ucn) from Rattus norvegicus (Rat).